The following is a 132-amino-acid chain: Small ribosomal subunit protein uS15 (132 aa).

Belongs to the universal ribosomal protein uS15 family. Part of the 30S ribosomal subunit.

The sequence is that of Small ribosomal subunit protein uS15 from Methanobrevibacter smithii (strain ATCC 35061 / DSM 861 / OCM 144 / PS).